A 147-amino-acid chain; its full sequence is Large ribosomal subunit protein uL16c (147 aa).

The segment covering M1–M17 has biased composition (basic residues). Residues M1–I20 form a disordered region.

Belongs to the universal ribosomal protein uL16 family. In terms of assembly, part of the 50S ribosomal subunit.

The protein localises to the plastid. It is found in the chloroplast. This is Large ribosomal subunit protein uL16c from Ipomoea purpurea (Common morning glory).